Here is a 316-residue protein sequence, read N- to C-terminus: MGKPGRVNQTTVSDFLLLGLSEWPEEQPLLFGIFLGMYLVTMVGNLLIILAISSDPHLHTPMYFFLANLSLTDACFTSASIPKMLANIHTQSQIISYSGCLAQLYFLLMFGGLDNCLLAVMAYDRYVAICQPLHYSTSMSPQLCALMLGVCWVLTNCPALMHTLLLTRVAFCAQKAIPHFYCDPSALLKLACSDTHVNELMIITMGLLFLTVPLLLIVFSYVRIFWAVFVISSPGGRWKAFSTCGSHLTVVLLFYGSLMGVYLLPPSTYSTERESRAAVLYMVIIPTLNPFIYSLRNRDMKEALGKLFVSGKTFFL.

At 1-28 the chain is on the extracellular side; the sequence is MGKPGRVNQTTVSDFLLLGLSEWPEEQP. A glycan (N-linked (GlcNAc...) asparagine) is linked at Asn-8. Residues 29-49 form a helical membrane-spanning segment; the sequence is LLFGIFLGMYLVTMVGNLLII. At 50-60 the chain is on the cytoplasmic side; the sequence is LAISSDPHLHT. Residues 61–81 traverse the membrane as a helical segment; that stretch reads PMYFFLANLSLTDACFTSASI. Residues 82 to 100 lie on the Extracellular side of the membrane; it reads PKMLANIHTQSQIISYSGC. A disulfide bridge connects residues Cys-100 and Cys-182. The chain crosses the membrane as a helical span at residues 101 to 121; the sequence is LAQLYFLLMFGGLDNCLLAVM. Residues 122-145 are Cytoplasmic-facing; sequence AYDRYVAICQPLHYSTSMSPQLCA. The chain crosses the membrane as a helical span at residues 146 to 166; sequence LMLGVCWVLTNCPALMHTLLL. Residues 167 to 199 are Extracellular-facing; the sequence is TRVAFCAQKAIPHFYCDPSALLKLACSDTHVNE. The chain crosses the membrane as a helical span at residues 200-220; the sequence is LMIITMGLLFLTVPLLLIVFS. At 221-243 the chain is on the cytoplasmic side; it reads YVRIFWAVFVISSPGGRWKAFST. The chain crosses the membrane as a helical span at residues 244-264; sequence CGSHLTVVLLFYGSLMGVYLL. The Extracellular portion of the chain corresponds to 265 to 274; sequence PPSTYSTERE. The chain crosses the membrane as a helical span at residues 275-295; the sequence is SRAAVLYMVIIPTLNPFIYSL. The Cytoplasmic segment spans residues 296 to 316; the sequence is RNRDMKEALGKLFVSGKTFFL.

The protein belongs to the G-protein coupled receptor 1 family.

It localises to the membrane. Its function is as follows. Odorant receptor. In Homo sapiens (Human), this protein is Olfactory receptor 1N2 (OR1N2).